We begin with the raw amino-acid sequence, 113 residues long: Iron-sulfur cluster insertion protein ErpA (113 aa).

Residues Cys-41, Cys-105, and Cys-107 each contribute to the iron-sulfur cluster site.

The protein belongs to the HesB/IscA family. Homodimer. Requires iron-sulfur cluster as cofactor.

Its function is as follows. Required for insertion of 4Fe-4S clusters for at least IspG. This chain is Iron-sulfur cluster insertion protein ErpA, found in Glaesserella parasuis serovar 5 (strain SH0165) (Haemophilus parasuis).